The following is a 453-amino-acid chain: Lipase 9 (453 aa).

An N-terminal signal peptide occupies residues 1 to 14 (MLYLILFLIAPIYA). An N-linked (GlcNAc...) asparagine glycan is attached at asparagine 36. Residues cysteine 110 and cysteine 281 are joined by a disulfide bond. Serine 194 (charge relay system) is an active-site residue. N-linked (GlcNAc...) asparagine glycans are attached at residues asparagine 229, asparagine 266, and asparagine 269. Catalysis depends on charge relay system residues aspartate 343 and histidine 376. The cysteines at positions 359 and 404 are disulfide-linked. Asparagine 417 is a glycosylation site (N-linked (GlcNAc...) asparagine).

The protein belongs to the AB hydrolase superfamily. Lipase family. Class Lip subfamily.

The protein localises to the secreted. It carries out the reaction a triacylglycerol + H2O = a diacylglycerol + a fatty acid + H(+). Secreted lipase that is able to hydrolyze both the neutral triacylglycerols and the monopalmitate ester Tween 40, allowing the use of hydrolyzed products as carbon sources. Has broad lipolytic activity, which may be important for colonization and subsequent infection, therefore contributing to the persistence and virulence in human tissue. This chain is Lipase 9, found in Candida albicans (strain SC5314 / ATCC MYA-2876) (Yeast).